The following is a 188-amino-acid chain: Chitin synthase 1 (188 aa).

The protein belongs to the chitin synthase family. Class I subfamily.

The protein localises to the cell membrane. It catalyses the reaction [(1-&gt;4)-N-acetyl-beta-D-glucosaminyl](n) + UDP-N-acetyl-alpha-D-glucosamine = [(1-&gt;4)-N-acetyl-beta-D-glucosaminyl](n+1) + UDP + H(+). Its function is as follows. Polymerizes chitin, a structural polymer of the cell wall and septum, by transferring the sugar moiety of UDP-GlcNAc to the non-reducing end of the growing chitin polymer. This chain is Chitin synthase 1 (CHS1), found in Ajellomyces dermatitidis (Blastomyces dermatitidis).